Here is a 268-residue protein sequence, read N- to C-terminus: MAIIDKKRVNQNFSRGAKTYDNYAQVQKHMADKLEIFVHGSKKQYNILEVGCGTGIFSQKILKRFPNSKIDLLDISPAMVETAKEKLGDSPNLNFIVEDVENYNPEKKYDLIFSNATFQWIDDQMRLFNHLYSLLDYGGKIAFSTFGNKTYFELRESLSTLDPELKYSQKFVKLDEMTEITNKNFRILAADEDFFIEKFENVMAFLKAIKGIGSNSALSNKRNFTREKFKALDKIYRDKFGDKNIINVTNHLLYMVLEKVKMRDENLK.

Belongs to the methyltransferase superfamily.

It catalyses the reaction malonyl-[ACP] + S-adenosyl-L-methionine = malonyl-[ACP] methyl ester + S-adenosyl-L-homocysteine. Its pathway is cofactor biosynthesis; biotin biosynthesis. In terms of biological role, converts the free carboxyl group of a malonyl-thioester to its methyl ester by transfer of a methyl group from S-adenosyl-L-methionine (SAM). It allows to synthesize pimeloyl-ACP via the fatty acid synthetic pathway. In Ilyobacter polytropus (strain ATCC 51220 / DSM 2926 / LMG 16218 / CuHBu1), this protein is Malonyl-[acyl-carrier protein] O-methyltransferase 1.